The following is a 442-amino-acid chain: 2-oxoisovalerate dehydrogenase subunit alpha, mitochondrial (442 aa).

The N-terminal 42 residues, 1–42 (MSAAKIWRPSRGLRQAALLLLGRSGVRGLARSHPSRQQQQQF), are a transit peptide targeting the mitochondrion. The disordered stretch occupies residues 30 to 50 (ARSHPSRQQQQQFPSLDDKPQ). Positions 155 and 156 each coordinate thiamine diphosphate. Residue S203 participates in K(+) binding. Residue S204 coordinates thiamine diphosphate. Residues P205, T208, and Q209 each coordinate K(+). Residue E235 participates in Mg(2+) binding. Thiamine diphosphate contacts are provided by G236, A237, and R262. 2 residues coordinate Mg(2+): N264 and Y266. H333 serves as a coordination point for thiamine diphosphate. S334 carries the phosphoserine; by BCKDK modification. At T335 the chain carries Phosphothreonine. Phosphoserine occurs at positions 336 and 344. K353 carries the post-translational modification N6-acetyllysine; alternate. K353 carries the post-translational modification N6-succinyllysine; alternate. K377 carries the N6-succinyllysine modification.

Belongs to the BCKDHA family. In terms of assembly, heterotetramer of 2 alpha/BCKDHA and 2 beta chains/BCKDHB that forms the branched-chain alpha-keto acid decarboxylase (E1) component of the BCKD complex. The branched-chain alpha-ketoacid dehydrogenase is a large complex composed of three major building blocks E1, E2 and E3. It is organized around E2, a 24-meric cubic core composed of DBT, to which are associated 6 to 12 copies of E1, and approximately 6 copies of the dehydrogenase E3, a DLD dimer. Interacts with PPM1K. Requires thiamine diphosphate as cofactor. Mg(2+) is required as a cofactor. Phosphorylated at Ser-334 by BCKDK and dephosphorylated by protein phosphatase PPM1K.

It is found in the mitochondrion matrix. The catalysed reaction is N(6)-[(R)-lipoyl]-L-lysyl-[protein] + 3-methyl-2-oxobutanoate + H(+) = N(6)-[(R)-S(8)-2-methylpropanoyldihydrolipoyl]-L-lysyl-[protein] + CO2. In terms of biological role, together with BCKDHB forms the heterotetrameric E1 subunit of the mitochondrial branched-chain alpha-ketoacid dehydrogenase (BCKD) complex. The BCKD complex catalyzes the multi-step oxidative decarboxylation of alpha-ketoacids derived from the branched-chain amino-acids valine, leucine and isoleucine producing CO2 and acyl-CoA which is subsequently utilized to produce energy. The E1 subunit catalyzes the first step with the decarboxylation of the alpha-ketoacid forming an enzyme-product intermediate. A reductive acylation mediated by the lipoylamide cofactor of E2 extracts the acyl group from the E1 active site for the next step of the reaction. The protein is 2-oxoisovalerate dehydrogenase subunit alpha, mitochondrial of Mus musculus (Mouse).